We begin with the raw amino-acid sequence, 356 residues long: tRNA N6-adenosine threonylcarbamoyltransferase (356 aa).

Fe cation-binding residues include His115 and His119. Substrate-binding positions include 138 to 142 (LVSGG), Asp171, Gly184, and Asn277. Position 305 (Asp305) interacts with Fe cation.

The protein belongs to the KAE1 / TsaD family. Requires Fe(2+) as cofactor.

The protein resides in the cytoplasm. The catalysed reaction is L-threonylcarbamoyladenylate + adenosine(37) in tRNA = N(6)-L-threonylcarbamoyladenosine(37) in tRNA + AMP + H(+). In terms of biological role, required for the formation of a threonylcarbamoyl group on adenosine at position 37 (t(6)A37) in tRNAs that read codons beginning with adenine. Is involved in the transfer of the threonylcarbamoyl moiety of threonylcarbamoyl-AMP (TC-AMP) to the N6 group of A37, together with TsaE and TsaB. TsaD likely plays a direct catalytic role in this reaction. This is tRNA N6-adenosine threonylcarbamoyltransferase from Polaromonas naphthalenivorans (strain CJ2).